Consider the following 521-residue polypeptide: Exoglucanase 1 (521 aa).

The N-terminal stretch at methionine 1–alanine 17 is a signal peptide. The tract at residues glutamine 18–glycine 450 is catalytic. A glycan (N-linked (GlcNAc...) asparagine) is linked at asparagine 32. Glutamate 229 acts as the Nucleophile in catalysis. The active-site Proton donor is the glutamate 234. N-linked (GlcNAc...) asparagine glycosylation is present at asparagine 287. A disordered region spans residues threonine 447–glycine 486. Residues glycine 451–threonine 485 form a linker region. The CBM1 domain maps to threonine 485–valine 521. 2 disulfides stabilise this stretch: cysteine 493–cysteine 510 and cysteine 504–cysteine 520.

It belongs to the glycosyl hydrolase 7 (cellulase C) family.

Its subcellular location is the secreted. The enzyme catalyses Hydrolysis of (1-&gt;4)-beta-D-glucosidic linkages in cellulose and cellotetraose, releasing cellobiose from the non-reducing ends of the chains.. The polypeptide is Exoglucanase 1 (cbh-1) (Neurospora crassa (strain ATCC 24698 / 74-OR23-1A / CBS 708.71 / DSM 1257 / FGSC 987)).